We begin with the raw amino-acid sequence, 299 residues long: tRNA pseudouridine synthase B (299 aa).

Asp38 functions as the Nucleophile in the catalytic mechanism.

This sequence belongs to the pseudouridine synthase TruB family. Type 1 subfamily.

It carries out the reaction uridine(55) in tRNA = pseudouridine(55) in tRNA. In terms of biological role, responsible for synthesis of pseudouridine from uracil-55 in the psi GC loop of transfer RNAs. The polypeptide is tRNA pseudouridine synthase B (Alkaliphilus oremlandii (strain OhILAs) (Clostridium oremlandii (strain OhILAs))).